Here is a 1496-residue protein sequence, read N- to C-terminus: Synaptojanin-2 (1496 aa).

Residues 120–444 (LKKILSSGVF…GHSLSKVFTG (325 aa)) form the SAC domain. One can recognise an RRM domain in the interval 889–968 (DATVVVNLQS…RAVKIRPKTK (80 aa)). Disordered stretches follow at residues 1027-1073 (NQPG…DDAD), 1085-1166 (GEFR…YNVK), 1190-1405 (ASEE…PEAA), and 1427-1473 (NTWL…KTLG). The segment covering 1101-1115 (RPRPPQPPQRPPPPT) has biased composition (pro residues). A phosphoserine mark is found at Ser1124 and Ser1191. Positions 1124–1140 (SDASISSGTHGQYSILQ) are enriched in polar residues. Pro residues-rich tracts occupy residues 1221–1235 (PQAP…PPRV) and 1319–1332 (VPPP…VPKV). Positions 1340-1359 (APAAFHLQVLQSNSQLLQGL) are enriched in low complexity. Composition is skewed to polar residues over residues 1383-1394 (FLSTSSATSPDS) and 1427-1442 (NTWL…SGTR).

It belongs to the synaptojanin family. The protein in the central section; belongs to the inositol 1,4,5-trisphosphate 5-phosphatase family. Binds to GRB2. Isoform 2A binds to SYNJ2BP/OMP25. Isoform 2B2 C-terminal proline-rich region binds to a variety of SH3 domain-containing proteins including SH3GL1, SH3GL2, SH3GL3 and GRB2.

Its subcellular location is the cytoplasm. The protein resides in the cell membrane. It is found in the membrane raft. It localises to the presynapse. The protein localises to the cytoskeleton. The catalysed reaction is a 1,2-diacyl-sn-glycero-3-phospho-(1D-myo-inositol-4,5-bisphosphate) + H2O = a 1,2-diacyl-sn-glycero-3-phospho-(1D-myo-inositol 4-phosphate) + phosphate. In terms of biological role, inositol 5-phosphatase which may be involved in distinct membrane trafficking and signal transduction pathways. May mediate the inhibitory effect of Rac1 on endocytosis. In Homo sapiens (Human), this protein is Synaptojanin-2 (SYNJ2).